Consider the following 237-residue polypeptide: Pyridoxine 5'-phosphate synthase (237 aa).

3-amino-2-oxopropyl phosphate contacts are provided by asparagine 7 and arginine 18. Histidine 43 (proton acceptor) is an active-site residue. Positions 45 and 50 each coordinate 1-deoxy-D-xylulose 5-phosphate. The active-site Proton acceptor is glutamate 70. 1-deoxy-D-xylulose 5-phosphate is bound at residue threonine 100. Histidine 190 (proton donor) is an active-site residue. Residues aspartate 191 and 213-214 (GH) each bind 3-amino-2-oxopropyl phosphate.

Belongs to the PNP synthase family. In terms of assembly, homooctamer; tetramer of dimers.

It localises to the cytoplasm. It carries out the reaction 3-amino-2-oxopropyl phosphate + 1-deoxy-D-xylulose 5-phosphate = pyridoxine 5'-phosphate + phosphate + 2 H2O + H(+). The protein operates within cofactor biosynthesis; pyridoxine 5'-phosphate biosynthesis; pyridoxine 5'-phosphate from D-erythrose 4-phosphate: step 5/5. Functionally, catalyzes the complicated ring closure reaction between the two acyclic compounds 1-deoxy-D-xylulose-5-phosphate (DXP) and 3-amino-2-oxopropyl phosphate (1-amino-acetone-3-phosphate or AAP) to form pyridoxine 5'-phosphate (PNP) and inorganic phosphate. The sequence is that of Pyridoxine 5'-phosphate synthase from Christiangramia forsetii (strain DSM 17595 / CGMCC 1.15422 / KT0803) (Gramella forsetii).